The chain runs to 317 residues: ADP-L-glycero-D-manno-heptose-6-epimerase (317 aa).

NADP(+) contacts are provided by residues 10–11 (FI), 31–32 (DD), Lys-38, Lys-53, 75–79 (QGACS), and Asn-92. Residue Tyr-139 is the Proton acceptor of the active site. An NADP(+)-binding site is contributed by Lys-143. A substrate-binding site is contributed by Asn-166. NADP(+) is bound by residues Val-167 and Lys-175. The active-site Proton acceptor is the Lys-175. Substrate-binding positions include Gly-177, His-184, 198–201 (FEGV), Arg-211, and Tyr-275.

Belongs to the NAD(P)-dependent epimerase/dehydratase family. HldD subfamily. In terms of assembly, homopentamer. Requires NADP(+) as cofactor.

It catalyses the reaction ADP-D-glycero-beta-D-manno-heptose = ADP-L-glycero-beta-D-manno-heptose. It functions in the pathway nucleotide-sugar biosynthesis; ADP-L-glycero-beta-D-manno-heptose biosynthesis; ADP-L-glycero-beta-D-manno-heptose from D-glycero-beta-D-manno-heptose 7-phosphate: step 4/4. Its function is as follows. Catalyzes the interconversion between ADP-D-glycero-beta-D-manno-heptose and ADP-L-glycero-beta-D-manno-heptose via an epimerization at carbon 6 of the heptose. This Shewanella piezotolerans (strain WP3 / JCM 13877) protein is ADP-L-glycero-D-manno-heptose-6-epimerase.